Here is a 347-residue protein sequence, read N- to C-terminus: Dihydroorotase (347 aa).

2 residues coordinate Zn(2+): His14 and His16. Residues His16 to Arg18 and Asn42 contribute to the substrate site. Zn(2+) is bound by residues Lys100, His137, and His175. Lys100 bears the N6-carboxylysine mark. His137 lines the substrate pocket. Leu220 contacts substrate. Asp248 lines the Zn(2+) pocket. The active site involves Asp248. Substrate-binding residues include His252 and Ala264.

It belongs to the metallo-dependent hydrolases superfamily. DHOase family. Class II DHOase subfamily. As to quaternary structure, homodimer. It depends on Zn(2+) as a cofactor.

The catalysed reaction is (S)-dihydroorotate + H2O = N-carbamoyl-L-aspartate + H(+). The protein operates within pyrimidine metabolism; UMP biosynthesis via de novo pathway; (S)-dihydroorotate from bicarbonate: step 3/3. Its function is as follows. Catalyzes the reversible cyclization of carbamoyl aspartate to dihydroorotate. This is Dihydroorotase from Pseudomonas syringae pv. syringae (strain B728a).